A 187-amino-acid chain; its full sequence is Peptide deformylase (187 aa).

Residues Cys107 and His149 each coordinate Fe cation. Glu150 is an active-site residue. Residue His153 coordinates Fe cation.

The protein belongs to the polypeptide deformylase family. Requires Fe(2+) as cofactor.

The enzyme catalyses N-terminal N-formyl-L-methionyl-[peptide] + H2O = N-terminal L-methionyl-[peptide] + formate. In terms of biological role, removes the formyl group from the N-terminal Met of newly synthesized proteins. Requires at least a dipeptide for an efficient rate of reaction. N-terminal L-methionine is a prerequisite for activity but the enzyme has broad specificity at other positions. The sequence is that of Peptide deformylase from Picosynechococcus sp. (strain ATCC 27264 / PCC 7002 / PR-6) (Agmenellum quadruplicatum).